Here is a 240-residue protein sequence, read N- to C-terminus: Proline-rich antigen homolog (240 aa).

Pro residues-rich tracts occupy residues 1-31 (MTEQPPPGGSYPPPPPPPGPSGGHEPPPAAP) and 38-78 (APPP…PPGP). The tract at residues 1–78 (MTEQPPPGGS…GGYAPPPPGP (78 aa)) is disordered. The 145-residue stretch at 89-233 (TPWITRVLAA…KRQTLADKIM (145 aa)) folds into the RDD domain. Helical transmembrane passes span 98–118 (AFIDWAPYVVLVGIGWVIMLV), 142–162 (SMIGQLVQWLLSVGGLAYLVW), and 203–223 (LAHFIDAIICFVGFLFPLWDA).

The protein belongs to the mycobacterial Pra family.

It localises to the cell membrane. This chain is Proline-rich antigen homolog, found in Mycobacterium tuberculosis (strain CDC 1551 / Oshkosh).